Here is a 97-residue protein sequence, read N- to C-terminus: Probable gamma-secretase subunit PEN-2 (97 aa).

Residues methionine 1–lysine 20 are Cytoplasmic-facing. The segment at residues leucine 21 to tyrosine 39 is an intramembrane region (helical). Residues phenylalanine 40–leucine 55 are Cytoplasmic-facing. The chain crosses the membrane as a helical span at residues lysine 56–tyrosine 76. Residues leucine 77–glycine 97 lie on the Lumenal side of the membrane.

It belongs to the PEN-2 family. As to quaternary structure, the functional gamma-secretase complex is composed of at least four polypeptides: a presenilin homodimer, nicastrin, aph1 and psenen.

The protein resides in the endoplasmic reticulum membrane. The protein localises to the golgi apparatus. It is found in the golgi stack membrane. Its subcellular location is the cell membrane. It localises to the membrane. In terms of biological role, essential subunit of the gamma-secretase complex, an endoprotease complex that catalyzes the intramembrane cleavage of integral membrane proteins such as Notch receptors. The gamma-secretase complex plays a role in Notch and Wnt signaling cascades and regulation of downstream processes via its role in processing key regulatory proteins. This Dictyostelium discoideum (Social amoeba) protein is Probable gamma-secretase subunit PEN-2 (psenen).